Consider the following 406-residue polypeptide: Na(+)/H(+) antiporter NhaA (406 aa).

The next 12 helical transmembrane spans lie at 29-49, 75-95, 111-131, 141-161, 170-190, 195-215, 220-240, 242-262, 278-298, 306-326, 349-369, and 382-402; these read FAGI…NNIF, FIEL…GLEM, ILPA…YMFF, GWAI…SFFS, AFII…LALF, INTP…ILNY, QLFY…ESGI, GTLC…GEFN, YFIL…YFAF, ILAL…LGIM, FYSI…IGSI, and AAVI…LKYC.

It belongs to the NhaA Na(+)/H(+) (TC 2.A.33) antiporter family.

Its subcellular location is the cell inner membrane. It carries out the reaction Na(+)(in) + 2 H(+)(out) = Na(+)(out) + 2 H(+)(in). Functionally, na(+)/H(+) antiporter that extrudes sodium in exchange for external protons. This is Na(+)/H(+) antiporter NhaA from Rickettsia massiliae (strain Mtu5).